The sequence spans 93 residues: MARSIKKGPFVDGHLEAKAQAEQAGSKKVIKTWSRRSTIIPEFIGLTFAVHNGKKFIPVFVTENMVGHKMGEFSPTRTFYGHAADKKSKLKKK.

The protein belongs to the universal ribosomal protein uS19 family.

In terms of biological role, protein S19 forms a complex with S13 that binds strongly to the 16S ribosomal RNA. The chain is Small ribosomal subunit protein uS19 from Citrifermentans bemidjiense (strain ATCC BAA-1014 / DSM 16622 / JCM 12645 / Bem) (Geobacter bemidjiensis).